The primary structure comprises 587 residues: Phosphatidylinositol-3-phosphatase SAC1 (587 aa).

Residues 1–520 (MATAAYEQLK…SPLSVPRDWK (520 aa)) lie on the Cytoplasmic side of the membrane. The SAC domain maps to 122-451 (LNHVLNVDGF…ANACAKQYAG (330 aa)). An essential for phosphatidylinositol-4-phosphate phosphatase activity region spans residues 452 to 587 (TGALKTDFTR…PRLVQKEKID (136 aa)). Lys-456 carries the post-translational modification N6-acetyllysine. A helical membrane pass occupies residues 521–541 (FLALPIIMVVAFSMCIICLLM). At 542-548 (AGDTWTE) the chain is on the lumenal side. The chain crosses the membrane as a helical span at residues 549–569 (TLAYVLFWGVASIGTFFIILY). Residues 570–587 (NGKDFVDAPRLVQKEKID) are Cytoplasmic-facing.

As to quaternary structure, interacts with TMEM39A. Interacts with SEC23A and SEC24A; this interaction is reduced in the absence of TMEM39A. Interacts with PLEKHA3 and VAPA and/or VAPB to form a ternary complex.

The protein localises to the endoplasmic reticulum membrane. The protein resides in the golgi apparatus membrane. It carries out the reaction a 1,2-diacyl-sn-glycero-3-phospho-(1D-myo-inositol-3-phosphate) + H2O = a 1,2-diacyl-sn-glycero-3-phospho-(1D-myo-inositol) + phosphate. The catalysed reaction is a 1,2-diacyl-sn-glycero-3-phospho-(1D-myo-inositol 4-phosphate) + H2O = a 1,2-diacyl-sn-glycero-3-phospho-(1D-myo-inositol) + phosphate. In terms of biological role, phosphoinositide phosphatase which catalyzes the hydrolysis of phosphatidylinositol 4-phosphate (PtdIns(4)P), phosphatidylinositol 3-phosphate (PtdIns(3)P) and has low activity towards phosphatidylinositol-3,5-bisphosphate (PtdIns(3,5)P2). Shows a very robust PtdIns(4)P phosphatase activity when it binds PtdIns(4)P in a 'cis' configuration in the cellular environment, with much less activity seen when it binds PtdIns(4)P in 'trans' configuration. PtdIns(4)P phosphatase activity (when it binds PtdIns(4)P in 'trans' configuration) is enhanced in the presence of PLEKHA3. In Pongo abelii (Sumatran orangutan), this protein is Phosphatidylinositol-3-phosphatase SAC1 (SACM1L).